The sequence spans 211 residues: Thiamine-phosphate synthase (211 aa).

4-amino-2-methyl-5-(diphosphooxymethyl)pyrimidine-binding positions include 37–41 (QLRIK) and Asn69. Mg(2+) contacts are provided by Asp70 and Asp89. Residue Ser108 coordinates 4-amino-2-methyl-5-(diphosphooxymethyl)pyrimidine. A 2-[(2R,5Z)-2-carboxy-4-methylthiazol-5(2H)-ylidene]ethyl phosphate-binding site is contributed by 134-136 (TQT). Lys137 contacts 4-amino-2-methyl-5-(diphosphooxymethyl)pyrimidine. 2-[(2R,5Z)-2-carboxy-4-methylthiazol-5(2H)-ylidene]ethyl phosphate contacts are provided by residues Gly166 and 186–187 (VS).

This sequence belongs to the thiamine-phosphate synthase family. Mg(2+) is required as a cofactor.

It catalyses the reaction 2-[(2R,5Z)-2-carboxy-4-methylthiazol-5(2H)-ylidene]ethyl phosphate + 4-amino-2-methyl-5-(diphosphooxymethyl)pyrimidine + 2 H(+) = thiamine phosphate + CO2 + diphosphate. It carries out the reaction 2-(2-carboxy-4-methylthiazol-5-yl)ethyl phosphate + 4-amino-2-methyl-5-(diphosphooxymethyl)pyrimidine + 2 H(+) = thiamine phosphate + CO2 + diphosphate. The enzyme catalyses 4-methyl-5-(2-phosphooxyethyl)-thiazole + 4-amino-2-methyl-5-(diphosphooxymethyl)pyrimidine + H(+) = thiamine phosphate + diphosphate. It participates in cofactor biosynthesis; thiamine diphosphate biosynthesis; thiamine phosphate from 4-amino-2-methyl-5-diphosphomethylpyrimidine and 4-methyl-5-(2-phosphoethyl)-thiazole: step 1/1. In terms of biological role, condenses 4-methyl-5-(beta-hydroxyethyl)thiazole monophosphate (THZ-P) and 2-methyl-4-amino-5-hydroxymethyl pyrimidine pyrophosphate (HMP-PP) to form thiamine monophosphate (TMP). The chain is Thiamine-phosphate synthase from Escherichia coli O6:H1 (strain CFT073 / ATCC 700928 / UPEC).